The following is a 440-amino-acid chain: Beta-1,3-galactosyl-O-glycosyl-glycoprotein beta-1,6-N-acetylglucosaminyltransferase (440 aa).

Residues 1-9 (MKMAGWKKK) are Cytoplasmic-facing. A helical; Signal-anchor for type II membrane protein transmembrane segment spans residues 10–30 (LCPGHHLWALGCYMLLAVVSL). The Lumenal segment spans residues 31–440 (RLSLRFKCDV…RHKAIYGTEL (410 aa)). N-linked (GlcNAc...) asparagine; by host glycans are attached at residues N72 and N108. 4 disulfides stabilise this stretch: C73–C230, C164–C384, C185–C212, and C393–C425.

This sequence belongs to the glycosyltransferase 14 family.

It is found in the host Golgi apparatus membrane. The enzyme catalyses a 3-O-[beta-D-galactosyl-(1-&gt;3)-N-acetyl-alpha-D-galactosaminyl]-L-seryl-[protein] + UDP-N-acetyl-alpha-D-glucosamine = 3-O-{beta-D-galactosyl-(1-&gt;3)-[N-acetyl-beta-D-glucosaminyl-(1-&gt;6)]-N-acetyl-alpha-D-galactosaminyl}-L-seryl-[protein] + UDP + H(+). The catalysed reaction is a 3-O-[beta-D-galactosyl-(1-&gt;3)-N-acetyl-alpha-D-galactosaminyl]-L-threonyl-[protein] + UDP-N-acetyl-alpha-D-glucosamine = a 3-O-{beta-D-galactosyl-(1-&gt;3)-[N-acetyl-beta-D-glucosaminyl-(1-&gt;6)]-N-acetyl-alpha-D-galactosaminyl}-L-threonyl-[protein] + UDP + H(+). It catalyses the reaction a beta-D-Gal-(1-&gt;4)-beta-D-GlcNAc-(1-&gt;3)-beta-D-Gal-(1-&gt;4)-beta-D-GlcNAc derivative + UDP-N-acetyl-alpha-D-glucosamine = a beta-D-Gal-(1-&gt;4)-beta-D-GlcNAc-(1-&gt;3)-[beta-D-GlcNAc-(1-&gt;6)]-beta-D-Gal-(1-&gt;4)-N-acetyl-beta-D-glucosaminyl derivative + UDP + H(+). It carries out the reaction 3-O-[N-acetyl-beta-D-glucosaminyl-(1-&gt;3)-N-acetyl-alpha-D-galactosaminyl]-L-seryl-[protein] + UDP-N-acetyl-alpha-D-glucosamine = 3-O-[N-acetyl-beta-D-glucosaminyl-(1-&gt;3)-[N-acetyl-beta-D-glucosaminyl-(1-&gt;6)]-N-acetyl-alpha-D-galactosaminyl]-L-seryl-[protein] + UDP + H(+). The enzyme catalyses a 3-O-[N-acetyl-beta-D-glucosaminyl-(1-&gt;3)-N-acetyl-alpha-D-galactosaminyl]-L-threonyl-[protein] + UDP-N-acetyl-alpha-D-glucosamine = 3-O-[N-acetyl-beta-D-glucosaminyl-(1-&gt;3)-[N-acetyl-beta-D-glucosaminyl-(1-&gt;6)]-N-acetyl-alpha-D-galactosaminyl]-L-threonyl-[protein] + UDP + H(+). The protein operates within protein modification; protein glycosylation. In terms of biological role, non-essential glycosyltransferase that can synthesize all known mucin beta 6 N-acetylglucosaminides. Mediates core 2 and core 4 O-glycan branching, 2 important steps in mucin-type biosynthesis. Has also I-branching enzyme activity by converting linear into branched poly-N-acetyllactosaminoglycans. Contributes to the post-translational modifications of structural proteins. This is Beta-1,3-galactosyl-O-glycosyl-glycoprotein beta-1,6-N-acetylglucosaminyltransferase (Bo17) from Bovine herpesvirus 4 (strain LVR140) (BoHV-4).